A 193-amino-acid polypeptide reads, in one-letter code: CDP-diacylglycerol--glycerol-3-phosphate 3-phosphatidyltransferase (193 aa).

The next 4 helical transmembrane spans lie at 8–28 (ITLA…APFD), 39–59 (IPVA…TDWV), 88–108 (AALI…IVII), and 157–177 (LVSF…TVVS).

It belongs to the CDP-alcohol phosphatidyltransferase class-I family.

Its subcellular location is the cell membrane. The catalysed reaction is a CDP-1,2-diacyl-sn-glycerol + sn-glycerol 3-phosphate = a 1,2-diacyl-sn-glycero-3-phospho-(1'-sn-glycero-3'-phosphate) + CMP + H(+). It functions in the pathway phospholipid metabolism; phosphatidylglycerol biosynthesis; phosphatidylglycerol from CDP-diacylglycerol: step 1/2. In terms of biological role, this protein catalyzes the committed step to the synthesis of the acidic phospholipids. This is CDP-diacylglycerol--glycerol-3-phosphate 3-phosphatidyltransferase (pgsA) from Bacillus subtilis (strain 168).